Here is a 92-residue protein sequence, read N- to C-terminus: Small ribosomal subunit protein uS19c (92 aa).

This sequence belongs to the universal ribosomal protein uS19 family.

The protein localises to the plastid. It is found in the chloroplast. Protein S19 forms a complex with S13 that binds strongly to the 16S ribosomal RNA. In Nicotiana tomentosiformis (Tobacco), this protein is Small ribosomal subunit protein uS19c.